A 755-amino-acid polypeptide reads, in one-letter code: Serine/threonine-protein kinase GA29083 (755 aa).

The span at 18 to 52 (QASASGSGTPKKTAASSAAAQNSKQLLDQLSQQQK) shows a compositional bias: low complexity. A disordered region spans residues 18–128 (QASASGSGTP…GSANTNGSAS (111 aa)). Composition is skewed to basic and acidic residues over residues 53 to 66 (AQEE…RDCD) and 74 to 84 (EPEKDLDELRD). Positions 87–99 (GSLTGSGSVGKSN) are enriched in polar residues. Over residues 100–128 (GSLSGASSTTSAPAGTSTPGSANTNGSAS) the composition is skewed to low complexity. 2 consecutive Doublecortin domains span residues 157-243 (HRIK…VDYN) and 314-397 (RIVT…VEDF). The Protein kinase domain occupies 484–742 (YTLSQIIGDG…SEDILDHYWT (259 aa)). ATP is bound by residues 490–498 (IGDGNFAIV) and Lys513. Asp605 acts as the Proton acceptor in catalysis.

The protein belongs to the protein kinase superfamily. CAMK Ser/Thr protein kinase family. CaMK subfamily.

It carries out the reaction L-seryl-[protein] + ATP = O-phospho-L-seryl-[protein] + ADP + H(+). It catalyses the reaction L-threonyl-[protein] + ATP = O-phospho-L-threonyl-[protein] + ADP + H(+). The polypeptide is Serine/threonine-protein kinase GA29083 (Drosophila pseudoobscura pseudoobscura (Fruit fly)).